Consider the following 170-residue polypeptide: Ribosome maturation factor RimM (170 aa).

A PRC barrel domain is found at 97–170 (NADEYYWVDL…LVVVDWDPEF (74 aa)).

The protein belongs to the RimM family. As to quaternary structure, binds ribosomal protein uS19.

It localises to the cytoplasm. In terms of biological role, an accessory protein needed during the final step in the assembly of 30S ribosomal subunit, possibly for assembly of the head region. Essential for efficient processing of 16S rRNA. May be needed both before and after RbfA during the maturation of 16S rRNA. It has affinity for free ribosomal 30S subunits but not for 70S ribosomes. The sequence is that of Ribosome maturation factor RimM from Stenotrophomonas maltophilia (strain R551-3).